The primary structure comprises 390 residues: Putative nickel insertion protein (390 aa).

This sequence belongs to the LarC family.

This is Putative nickel insertion protein from Myxococcus xanthus (strain DK1622).